The chain runs to 1474 residues: Alpha-2-macroglobulin-P (1474 aa).

A signal peptide spans Met1–Ala32. Cys55 and Cys93 form a disulfide bridge. Asn62, Asn77, and Asn253 each carry an N-linked (GlcNAc...) asparagine glycan. Cystine bridges form between Cys257–Cys305 and Cys275–Cys293. Residue Asn402 is glycosylated (N-linked (GlcNAc...) asparagine). 3 cysteine pairs are disulfide-bonded: Cys476–Cys569, Cys601–Cys771, and Cys650–Cys697. Positions Leu623–Ala752 are bait region. Residues Asn654 and Asn774 are each glycosylated (N-linked (GlcNAc...) asparagine). Disulfide bonds link Cys821-Cys849, Cys847-Cys883, Cys921-Cys1321, Cys1079-Cys1127, and Cys1352-Cys1467. Asn869 is a glycosylation site (N-linked (GlcNAc...) asparagine). A cross-link (isoglutamyl cysteine thioester (Cys-Gln)) is located at residues Cys972 to Gln975. N-linked (GlcNAc...) asparagine glycosylation is present at Asn991. Asn1366 carries N-linked (GlcNAc...) asparagine glycosylation.

It belongs to the protease inhibitor I39 (alpha-2-macroglobulin) family. Homotetramer; disulfide-linked. As to expression, expressed in uterus, mesometrial lymphoid aggregate and mammary tissue during pregnancy. Expressed in ovary, testis and kidney. Low level expression in heart. Not expressed in liver.

The protein localises to the secreted. In terms of biological role, is able to inhibit all four classes of proteinases by a unique 'trapping' mechanism. This protein has a peptide stretch, called the 'bait region' which contains specific cleavage sites for different proteinases. When a proteinase cleaves the bait region, a conformational change is induced in the protein which traps the proteinase. The entrapped enzyme remains active against low molecular weight substrates (activity against high molecular weight substrates is greatly reduced). Following cleavage in the bait region a thioester bond is hydrolyzed and mediates the covalent binding of the protein to the proteinase. In Mus musculus (Mouse), this protein is Alpha-2-macroglobulin-P.